A 588-amino-acid chain; its full sequence is UDP-N-acetylmuramate--L-alanine ligase (588 aa).

119–125 contributes to the ATP binding site; it reads GSHGKST. Positions 344-371 are enriched in low complexity; it reads VPAAAGAAAAPPVRRDPATAAAAATTAP. Residues 344 to 411 are disordered; the sequence is VPAAAGAAAA…APAAGPDHAA (68 aa). Pro residues predominate over residues 372-381; the sequence is IGPPDSPPPT. The span at 382–411 shows a compositional bias: low complexity; sequence GIALPRAAPPAVDAPVAATPAPAAGPDHAA.

It belongs to the MurCDEF family.

Its subcellular location is the cytoplasm. It carries out the reaction UDP-N-acetyl-alpha-D-muramate + L-alanine + ATP = UDP-N-acetyl-alpha-D-muramoyl-L-alanine + ADP + phosphate + H(+). The protein operates within cell wall biogenesis; peptidoglycan biosynthesis. Its function is as follows. Cell wall formation. The sequence is that of UDP-N-acetylmuramate--L-alanine ligase from Frankia alni (strain DSM 45986 / CECT 9034 / ACN14a).